The following is a 220-amino-acid chain: Adenylate kinase (220 aa).

Residue 10–15 coordinates ATP; it reads GAGKGT. The NMP stretch occupies residues 30 to 59; it reads STGDMLRAAVKNCTPLGLKAKEIMDAGGLV. AMP is bound by residues Thr31, Arg36, 57–59, 85–88, and Gln92; these read GLV and GFPR. An LID region spans residues 126–163; it reads GRRTCPSCGKGFHVLFAPPRKAGVCDFCGADLVQRGDD. Arg127 lines the ATP pocket. The Zn(2+) site is built by Cys130, Cys133, Cys150, and Cys153. AMP is bound by residues Arg160 and Arg171. Leu199 is a binding site for ATP.

This sequence belongs to the adenylate kinase family. Monomer.

The protein localises to the cytoplasm. The catalysed reaction is AMP + ATP = 2 ADP. The protein operates within purine metabolism; AMP biosynthesis via salvage pathway; AMP from ADP: step 1/1. Its function is as follows. Catalyzes the reversible transfer of the terminal phosphate group between ATP and AMP. Plays an important role in cellular energy homeostasis and in adenine nucleotide metabolism. This Pelobacter propionicus (strain DSM 2379 / NBRC 103807 / OttBd1) protein is Adenylate kinase.